Here is a 1410-residue protein sequence, read N- to C-terminus: DNA-directed RNA polymerase subunit beta' (1410 aa).

Cysteine 70, cysteine 72, cysteine 85, and cysteine 88 together coordinate Zn(2+). 3 residues coordinate Mg(2+): aspartate 460, aspartate 462, and aspartate 464. 4 residues coordinate Zn(2+): cysteine 814, cysteine 888, cysteine 895, and cysteine 898.

Belongs to the RNA polymerase beta' chain family. The RNAP catalytic core consists of 2 alpha, 1 beta, 1 beta' and 1 omega subunit. When a sigma factor is associated with the core the holoenzyme is formed, which can initiate transcription. The cofactor is Mg(2+). It depends on Zn(2+) as a cofactor.

The catalysed reaction is RNA(n) + a ribonucleoside 5'-triphosphate = RNA(n+1) + diphosphate. DNA-dependent RNA polymerase catalyzes the transcription of DNA into RNA using the four ribonucleoside triphosphates as substrates. The polypeptide is DNA-directed RNA polymerase subunit beta' (Shewanella denitrificans (strain OS217 / ATCC BAA-1090 / DSM 15013)).